The sequence spans 271 residues: Phosphatidylglycerol--prolipoprotein diacylglyceryl transferase (271 aa).

4 helical membrane passes run Leu-18–Ala-38, Ile-51–Tyr-71, Ile-89–Val-109, and Gly-115–Ile-135. A 1,2-diacyl-sn-glycero-3-phospho-(1'-sn-glycerol) is bound at residue Arg-137. 3 helical membrane-spanning segments follow: residues His-177–Leu-197, Gly-205–Met-225, and Leu-236–Phe-256.

It belongs to the Lgt family.

It is found in the cell membrane. The enzyme catalyses L-cysteinyl-[prolipoprotein] + a 1,2-diacyl-sn-glycero-3-phospho-(1'-sn-glycerol) = an S-1,2-diacyl-sn-glyceryl-L-cysteinyl-[prolipoprotein] + sn-glycerol 1-phosphate + H(+). It participates in protein modification; lipoprotein biosynthesis (diacylglyceryl transfer). Its function is as follows. Catalyzes the transfer of the diacylglyceryl group from phosphatidylglycerol to the sulfhydryl group of the N-terminal cysteine of a prolipoprotein, the first step in the formation of mature lipoproteins. The chain is Phosphatidylglycerol--prolipoprotein diacylglyceryl transferase from Bacillus velezensis (strain DSM 23117 / BGSC 10A6 / LMG 26770 / FZB42) (Bacillus amyloliquefaciens subsp. plantarum).